The primary structure comprises 616 residues: Chaperone protein HscA (616 aa).

This sequence belongs to the heat shock protein 70 family.

Its function is as follows. Chaperone involved in the maturation of iron-sulfur cluster-containing proteins. Has a low intrinsic ATPase activity which is markedly stimulated by HscB. Involved in the maturation of IscU. In Salmonella paratyphi B (strain ATCC BAA-1250 / SPB7), this protein is Chaperone protein HscA.